A 740-amino-acid chain; its full sequence is Zn(2)-C6 fungal-type transcription factor mpsB (740 aa).

A DNA-binding region (zn(2)-C6 fungal-type) is located at residues 25–46 (RLKCDRNQPCSTCSHRGLSFSC). The disordered stretch occupies residues 625-645 (SISTPSHDQDDLDGEAATEAT).

The protein localises to the nucleus. Transcription factor; part of the gene cluster that mediates the biosynthesis of macrophasetins, 3-decalinoyltetramic acids (DTAs) which feature a tetramate (pyrrolidine-2,4-dione) unit connected to a decalin fragment and that have potent bioactivities. In Macrophomina phaseolina (strain MS6) (Charcoal rot fungus), this protein is Zn(2)-C6 fungal-type transcription factor mpsB.